We begin with the raw amino-acid sequence, 402 residues long: Phosphoglycerate kinase (402 aa).

Substrate-binding positions include Asp-24–Asn-26, Arg-40, His-63–Arg-66, Arg-122, and Arg-155. ATP-binding positions include Lys-206, Gly-297, Glu-328, and Gly-358 to Ser-361.

This sequence belongs to the phosphoglycerate kinase family. Monomer.

The protein localises to the cytoplasm. It catalyses the reaction (2R)-3-phosphoglycerate + ATP = (2R)-3-phospho-glyceroyl phosphate + ADP. It participates in carbohydrate degradation; glycolysis; pyruvate from D-glyceraldehyde 3-phosphate: step 2/5. This Prochlorococcus marinus (strain MIT 9301) protein is Phosphoglycerate kinase.